A 183-amino-acid chain; its full sequence is Photosystem I assembly protein Ycf4 (183 aa).

Transmembrane regions (helical) follow at residues 17–39 (NYLLLIIMLGGGISFFIVGFLSY) and 59–81 (FIPQGITMIFYGTMAICLSIYIY).

It belongs to the Ycf4 family.

It is found in the plastid. It localises to the chloroplast thylakoid membrane. In terms of biological role, seems to be required for the assembly of the photosystem I complex. In Cyanidium caldarium (Red alga), this protein is Photosystem I assembly protein Ycf4.